A 380-amino-acid polypeptide reads, in one-letter code: L-lactate dehydrogenase (380 aa).

One can recognise an FMN hydroxy acid dehydrogenase domain in the interval 1 to 380 (MIISASTDYR…SADSLVQGLR (380 aa)). Tyr24 provides a ligand contact to substrate. Residues Ser106 and Gln127 each contribute to the FMN site. Substrate is bound at residue Tyr129. Position 155 (Thr155) interacts with FMN. Residue Arg164 participates in substrate binding. Lys251 serves as a coordination point for FMN. Catalysis depends on His275, which acts as the Proton acceptor. Arg278 lines the substrate pocket. Residue 306-330 (DSGIRSGLDVVRMIALGADGVLLGR) participates in FMN binding.

The protein belongs to the FMN-dependent alpha-hydroxy acid dehydrogenase family. FMN is required as a cofactor.

The protein resides in the cell inner membrane. The catalysed reaction is (S)-lactate + A = pyruvate + AH2. Its function is as follows. Catalyzes the conversion of L-lactate to pyruvate. Is coupled to the respiratory chain. The polypeptide is L-lactate dehydrogenase (Serratia proteamaculans (strain 568)).